We begin with the raw amino-acid sequence, 262 residues long: ELL-associated factor 2 (262 aa).

Positions 17-104 (LKLGESFEKQ…TGECRLEKLS (88 aa)) are necessary for interaction with ELL. The segment covering 124 to 144 (LEQQQQQMWNPPRTSNLVQHS) has biased composition (polar residues). 2 disordered regions span residues 124 to 154 (LEQQQQQMWNPPRTSNLVQHSPSEDKLSPTS) and 170 to 232 (MDQM…ADTT). 3 positions are modified to phosphoserine: Ser-146, Ser-151, and Ser-154. Residues 174-192 (SSCDSSSDSRSSSSSSSED) show a composition bias toward low complexity. Residues 177–262 (DSSSDSRSSS…LSESDSDSED (86 aa)) form a necessary for transactivation activity region. The necessary for interaction with TCEA1 and transactivation activity stretch occupies residues 248–262 (RSDLQLSESDSDSED).

It belongs to the EAF family. As to quaternary structure, component of the super elongation complex (SEC), at least composed of EAF1, EAF2, CDK9, MLLT3/AF9, AFF (AFF1 or AFF4), the P-TEFb complex and ELL (ELL, ELL2 or ELL3). Interacts with ELL, ELL2 and TCEA1.

The protein localises to the nucleus speckle. Its function is as follows. Acts as a transcriptional transactivator of ELL, ELL2 and TCEA1 elongation activities. Potent inducer of apoptosis in prostatic and non-prostatic cell lines. This is ELL-associated factor 2 (Eaf2) from Rattus norvegicus (Rat).